The following is a 194-amino-acid chain: ATP-dependent Clp protease proteolytic subunit (194 aa).

The active-site Nucleophile is Ser98. His123 is a catalytic residue.

It belongs to the peptidase S14 family. In terms of assembly, fourteen ClpP subunits assemble into 2 heptameric rings which stack back to back to give a disk-like structure with a central cavity, resembling the structure of eukaryotic proteasomes.

The protein resides in the cytoplasm. It carries out the reaction Hydrolysis of proteins to small peptides in the presence of ATP and magnesium. alpha-casein is the usual test substrate. In the absence of ATP, only oligopeptides shorter than five residues are hydrolyzed (such as succinyl-Leu-Tyr-|-NHMec, and Leu-Tyr-Leu-|-Tyr-Trp, in which cleavage of the -Tyr-|-Leu- and -Tyr-|-Trp bonds also occurs).. Cleaves peptides in various proteins in a process that requires ATP hydrolysis. Has a chymotrypsin-like activity. Plays a major role in the degradation of misfolded proteins. The polypeptide is ATP-dependent Clp protease proteolytic subunit (Alkaliphilus metalliredigens (strain QYMF)).